Consider the following 377-residue polypeptide: tRNA-specific 2-thiouridylase MnmA (377 aa).

ATP contacts are provided by residues 9–16 and L35; that span reads AMSGGVDS. The active-site Nucleophile is C105. An intrachain disulfide couples C105 to C201. Residue G129 coordinates ATP. Positions 151–153 are interaction with tRNA; the sequence is KNQ. The active-site Cysteine persulfide intermediate is the C201. The interaction with tRNA stretch occupies residues 307-308; that stretch reads RY.

The protein belongs to the MnmA/TRMU family.

It is found in the cytoplasm. It catalyses the reaction S-sulfanyl-L-cysteinyl-[protein] + uridine(34) in tRNA + AH2 + ATP = 2-thiouridine(34) in tRNA + L-cysteinyl-[protein] + A + AMP + diphosphate + H(+). In terms of biological role, catalyzes the 2-thiolation of uridine at the wobble position (U34) of tRNA, leading to the formation of s(2)U34. The chain is tRNA-specific 2-thiouridylase MnmA from Leptospira borgpetersenii serovar Hardjo-bovis (strain JB197).